A 240-amino-acid chain; its full sequence is Orotidine 5'-phosphate decarboxylase (240 aa).

Substrate is bound by residues D10, K32, 59-68 (DLKLHDIPNT), T122, R183, Q192, G212, and R213. The active-site Proton donor is K61.

Belongs to the OMP decarboxylase family. Type 1 subfamily. As to quaternary structure, homodimer.

It carries out the reaction orotidine 5'-phosphate + H(+) = UMP + CO2. It participates in pyrimidine metabolism; UMP biosynthesis via de novo pathway; UMP from orotate: step 2/2. Functionally, catalyzes the decarboxylation of orotidine 5'-monophosphate (OMP) to uridine 5'-monophosphate (UMP). This is Orotidine 5'-phosphate decarboxylase from Carboxydothermus hydrogenoformans (strain ATCC BAA-161 / DSM 6008 / Z-2901).